A 371-amino-acid polypeptide reads, in one-letter code: Gamma-tocopherol methyltransferase, chloroplastic (371 aa).

A chloroplast-targeting transit peptide spans methionine 1 to glutamine 65. An SAM motif I region spans residues isoleucine 153–glycine 162. The interval glycine 216 to methionine 224 is SAM motif II. The segment at valine 243–isoleucine 252 is SAM motif III.

It belongs to the class I-like SAM-binding methyltransferase superfamily. gTMT family. As to quaternary structure, homodimer.

It is found in the plastid. The protein resides in the chloroplast inner membrane. It carries out the reaction picrinine + S-adenosyl-L-methionine = ervincine + S-adenosyl-L-homocysteine + H(+). It participates in alkaloid biosynthesis; vindoline biosynthesis. S-adenosyl-L-methionine-dependent N-methyltransferase involved in the biosynthesis of biologically active monoterpenoid indole alkaloids (MIAs) natural products including vindoline. Inactive with picrinine as substrate. The protein is Gamma-tocopherol methyltransferase, chloroplastic of Catharanthus roseus (Madagascar periwinkle).